We begin with the raw amino-acid sequence, 475 residues long: Sensor histidine kinase QseE (475 aa).

Topologically, residues methionine 1–glutamine 13 are cytoplasmic. A helical transmembrane segment spans residues leucine 14–tryptophan 34. Over glutamine 35–glutamine 173 the chain is Periplasmic. The chain crosses the membrane as a helical span at residues tyrosine 174–threonine 194. Residues arginine 195 to lysine 475 are Cytoplasmic-facing. The Histidine kinase domain occupies histidine 256–lysine 472. Histidine 259 bears the Phosphohistidine; by autocatalysis mark.

In terms of processing, autophosphorylated.

It is found in the cell inner membrane. It carries out the reaction ATP + protein L-histidine = ADP + protein N-phospho-L-histidine.. In terms of biological role, member of the two-component regulatory system QseF/QseE involved in the regulation of virulence and metabolism in EHEC. Required for pedestal formation in host epithelial cells during infection. Autophosphorylates in response to epinephrine, sulfate or phosphate and then probably transfers its phosphate group to QseF. The chain is Sensor histidine kinase QseE (qseE) from Escherichia coli O157:H7.